Consider the following 359-residue polypeptide: UPF0284 protein MTH_1426 (359 aa).

It belongs to the UPF0284 family.

The sequence is that of UPF0284 protein MTH_1426 from Methanothermobacter thermautotrophicus (strain ATCC 29096 / DSM 1053 / JCM 10044 / NBRC 100330 / Delta H) (Methanobacterium thermoautotrophicum).